We begin with the raw amino-acid sequence, 174 residues long: Crossover junction endodeoxyribonuclease RuvC (174 aa).

Active-site residues include Asp8, Glu67, and Asp139. Mg(2+)-binding residues include Asp8, Glu67, and Asp139.

This sequence belongs to the RuvC family. In terms of assembly, homodimer which binds Holliday junction (HJ) DNA. The HJ becomes 2-fold symmetrical on binding to RuvC with unstacked arms; it has a different conformation from HJ DNA in complex with RuvA. In the full resolvosome a probable DNA-RuvA(4)-RuvB(12)-RuvC(2) complex forms which resolves the HJ. Requires Mg(2+) as cofactor.

The protein localises to the cytoplasm. The catalysed reaction is Endonucleolytic cleavage at a junction such as a reciprocal single-stranded crossover between two homologous DNA duplexes (Holliday junction).. The RuvA-RuvB-RuvC complex processes Holliday junction (HJ) DNA during genetic recombination and DNA repair. Endonuclease that resolves HJ intermediates. Cleaves cruciform DNA by making single-stranded nicks across the HJ at symmetrical positions within the homologous arms, yielding a 5'-phosphate and a 3'-hydroxyl group; requires a central core of homology in the junction. The consensus cleavage sequence is 5'-(A/T)TT(C/G)-3'. Cleavage occurs on the 3'-side of the TT dinucleotide at the point of strand exchange. HJ branch migration catalyzed by RuvA-RuvB allows RuvC to scan DNA until it finds its consensus sequence, where it cleaves and resolves the cruciform DNA. The protein is Crossover junction endodeoxyribonuclease RuvC of Pseudomonas putida (strain ATCC 700007 / DSM 6899 / JCM 31910 / BCRC 17059 / LMG 24140 / F1).